The following is a 202-amino-acid chain: dTTP/UTP pyrophosphatase (202 aa).

Asp-76 functions as the Proton acceptor in the catalytic mechanism.

The protein belongs to the Maf family. YhdE subfamily. It depends on a divalent metal cation as a cofactor.

It is found in the cytoplasm. The enzyme catalyses dTTP + H2O = dTMP + diphosphate + H(+). It catalyses the reaction UTP + H2O = UMP + diphosphate + H(+). In terms of biological role, nucleoside triphosphate pyrophosphatase that hydrolyzes dTTP and UTP. May have a dual role in cell division arrest and in preventing the incorporation of modified nucleotides into cellular nucleic acids. In Neisseria meningitidis serogroup B (strain ATCC BAA-335 / MC58), this protein is dTTP/UTP pyrophosphatase.